A 320-amino-acid polypeptide reads, in one-letter code: SUMO-activating enzyme subunit 1B-1 (320 aa).

Met1 is modified (N-acetylmethionine).

Belongs to the ubiquitin-activating E1 family. In terms of assembly, heterodimer of SAE1A or SAE1B and SAE2. The complex binds SUMO proteins via SAE2.

It localises to the nucleus. Its pathway is protein modification; protein sumoylation. In terms of biological role, the dimeric enzyme acts as an E1 ligase for SUMO1 and SUMO2. It mediates ATP-dependent activation of SUMO proteins and formation of a thioester with a conserved cysteine residue on SAE2. Functionally redundant with its paralog SAE1A. In Arabidopsis thaliana (Mouse-ear cress), this protein is SUMO-activating enzyme subunit 1B-1 (SAE1B-1).